We begin with the raw amino-acid sequence, 572 residues long: Isocitrate lyase (572 aa).

Ser-104 to Trp-106 is a binding site for substrate. Asp-175 is a Mg(2+) binding site. The Proton acceptor role is filled by Cys-213. Substrate contacts are provided by residues Gly-214–His-215, Arg-250, Asn-437–Ser-441, and Thr-472. The segment at Gln-550 to Met-572 is disordered. The short motif at Ser-570–Met-572 is the Microbody targeting signal element.

This sequence belongs to the isocitrate lyase/PEP mutase superfamily. Isocitrate lyase family. Mg(2+) serves as cofactor. As to expression, expressed in leaves.

It localises to the glyoxysome. The enzyme catalyses D-threo-isocitrate = glyoxylate + succinate. The protein operates within carbohydrate metabolism; glyoxylate cycle; (S)-malate from isocitrate: step 1/2. Involved in storage lipid mobilization during the growth of higher plant seedling. In Oryza sativa subsp. japonica (Rice), this protein is Isocitrate lyase.